Reading from the N-terminus, the 164-residue chain is Large ribosomal subunit protein uL10 (164 aa).

This sequence belongs to the universal ribosomal protein uL10 family. Part of the ribosomal stalk of the 50S ribosomal subunit. The N-terminus interacts with L11 and the large rRNA to form the base of the stalk. The C-terminus forms an elongated spine to which L12 dimers bind in a sequential fashion forming a multimeric L10(L12)X complex.

Forms part of the ribosomal stalk, playing a central role in the interaction of the ribosome with GTP-bound translation factors. This Photobacterium profundum (strain SS9) protein is Large ribosomal subunit protein uL10.